Consider the following 158-residue polypeptide: NAD(P)H-quinone oxidoreductase subunit J, chloroplastic (158 aa).

This sequence belongs to the complex I 30 kDa subunit family. As to quaternary structure, NDH is composed of at least 16 different subunits, 5 of which are encoded in the nucleus.

It localises to the plastid. The protein localises to the chloroplast thylakoid membrane. The catalysed reaction is a plastoquinone + NADH + (n+1) H(+)(in) = a plastoquinol + NAD(+) + n H(+)(out). It carries out the reaction a plastoquinone + NADPH + (n+1) H(+)(in) = a plastoquinol + NADP(+) + n H(+)(out). Its function is as follows. NDH shuttles electrons from NAD(P)H:plastoquinone, via FMN and iron-sulfur (Fe-S) centers, to quinones in the photosynthetic chain and possibly in a chloroplast respiratory chain. The immediate electron acceptor for the enzyme in this species is believed to be plastoquinone. Couples the redox reaction to proton translocation, and thus conserves the redox energy in a proton gradient. This Lupinus luteus (European yellow lupine) protein is NAD(P)H-quinone oxidoreductase subunit J, chloroplastic.